A 425-amino-acid polypeptide reads, in one-letter code: Transmembrane protein 184A (425 aa).

7 helical membrane passes run 51–71, 96–116, 133–153, 189–209, 226–246, 261–281, and 303–323; these read LFLTSALARGVSGVFVWTALL, LLFIVPIYAFDSWLSLLLLGG, FVIYSFLTLCFQYLGGESAIM, TLQFCIVKPVMALITIILQAF, VTLVYNASVSLALYALFLFYF, FLTIKAIIFLSFWQGMLLAIL, and LAAGYQNFLICVEMLFASLAL. The interval 375–425 is disordered; that stretch reads QYTQQSTHEAPGPGQGGHPAPSTHPGPASGSGGGKKSRNIEKRMLIPSEDL. The span at 392-402 shows a compositional bias: low complexity; sequence HPAPSTHPGPA.

The protein belongs to the TMEM184 family. As to expression, expressed in testis, pancreas, parotid salivary gland and mammary gland (at protein level).

The protein localises to the cell membrane. It localises to the cytoplasm. Its subcellular location is the perinuclear region. It is found in the cytoplasmic vesicle membrane. The protein resides in the early endosome membrane. The protein localises to the endosome. It localises to the cytoplasmic vesicle. Its subcellular location is the secretory vesicle membrane. Its function is as follows. Acts as a heparin receptor in vascular cells. May be involved in vesicle transport in exocrine cells and Sertoli cells. This Mus musculus (Mouse) protein is Transmembrane protein 184A (Tmem184a).